We begin with the raw amino-acid sequence, 710 residues long: PC3-like endoprotease variant B (710 aa).

The signal sequence occupies residues 1-29 (MNYRGIYRRRYVFVLLLLVAVVNISYGWT). Residues N23, N62, and N190 are each glycosylated (N-linked (GlcNAc...) asparagine). Residues 30–152 (VLKNKDYKRR…QQKILERVKR (123 aa)) constitute a propeptide that is removed on maturation. Residues 164-486 (MWYLLNTGQA…FGRLDANAMV (323 aa)) form the Peptidase S8 domain. Active-site charge relay system residues include D202 and H242. 2 disulfide bridges follow: C259-C411 and C351-C381. The Charge relay system role is filled by S419. Residues 495-638 (LPAQRKCTAA…EERVIDTQTK (144 aa)) enclose the P/Homo B domain. C501 and C527 are disulfide-bonded. The interval 668–710 (TIEGSTQDHVKPKEGAKEPWGNYRNTNNINNNSSTAFKRKKKQ) is disordered. A compositionally biased stretch (basic and acidic residues) spans 673–684 (TQDHVKPKEGAK). Positions 689–699 (NYRNTNNINNN) are enriched in low complexity. Residues N698 and N699 are each glycosylated (N-linked (GlcNAc...) asparagine).

The protein belongs to the peptidase S8 family. Furin subfamily. In terms of tissue distribution, predominantly in the body column.

Its function is as follows. Probably involved in the processing of hormone and other protein precursors at sites comprised of pairs of basic amino acid residues. This Hydra vulgaris (Hydra) protein is PC3-like endoprotease variant B.